A 61-amino-acid chain; its full sequence is MPEFQERVRNFFKESKRVFLVTKKPGWEEYKKAAKITGLGILVIGLVGMLIRIIGILMLGG.

Residues 39–59 (LGILVIGLVGMLIRIIGILML) traverse the membrane as a helical segment.

This sequence belongs to the SecE/SEC61-gamma family. As to quaternary structure, component of the Sec protein translocase complex. Heterotrimer consisting of SecY (alpha), SecG (beta) and SecE (gamma) subunits. The heterotrimers can form oligomers, although 1 heterotrimer is thought to be able to translocate proteins. Interacts with the ribosome. May interact with SecDF, and other proteins may be involved.

It is found in the cell membrane. Its function is as follows. Essential subunit of the Sec protein translocation channel SecYEG. Clamps together the 2 halves of SecY. May contact the channel plug during translocation. The chain is Protein translocase subunit SecE from Pyrococcus horikoshii (strain ATCC 700860 / DSM 12428 / JCM 9974 / NBRC 100139 / OT-3).